The following is a 443-amino-acid chain: Thymidine phosphorylase (443 aa).

Belongs to the thymidine/pyrimidine-nucleoside phosphorylase family. Homodimer.

It catalyses the reaction thymidine + phosphate = 2-deoxy-alpha-D-ribose 1-phosphate + thymine. It functions in the pathway pyrimidine metabolism; dTMP biosynthesis via salvage pathway; dTMP from thymine: step 1/2. Its function is as follows. The enzymes which catalyze the reversible phosphorolysis of pyrimidine nucleosides are involved in the degradation of these compounds and in their utilization as carbon and energy sources, or in the rescue of pyrimidine bases for nucleotide synthesis. The polypeptide is Thymidine phosphorylase (Shewanella amazonensis (strain ATCC BAA-1098 / SB2B)).